Consider the following 89-residue polypeptide: Small ribosomal subunit protein uS15 (89 aa).

The protein belongs to the universal ribosomal protein uS15 family. In terms of assembly, part of the 30S ribosomal subunit. Forms a bridge to the 50S subunit in the 70S ribosome, contacting the 23S rRNA.

One of the primary rRNA binding proteins, it binds directly to 16S rRNA where it helps nucleate assembly of the platform of the 30S subunit by binding and bridging several RNA helices of the 16S rRNA. Its function is as follows. Forms an intersubunit bridge (bridge B4) with the 23S rRNA of the 50S subunit in the ribosome. The protein is Small ribosomal subunit protein uS15 of Salinispora tropica (strain ATCC BAA-916 / DSM 44818 / JCM 13857 / NBRC 105044 / CNB-440).